We begin with the raw amino-acid sequence, 209 residues long: MYNKVLIIDDHPVLRFAVRVLMEKEGFEVIGETDNGIDGLKIAREKIPNLVVLDIGIPKLDGLEVIARLQSLGLPLRVLVLTGQPPSLFARRCLNSGAAGFVCKHENLHEVINAAKAVMAGYTYFPSTTLSEMRMGDNAKSDSTLISVLSNRELTVLQLLAQGMSNKDIADSMFLSNKTVSTYKTRLLQKLNATSLVELIDLAKRNNLA.

Positions 4-119 (KVLIIDDHPV…EVINAAKAVM (116 aa)) constitute a Response regulatory domain. Aspartate 54 is subject to 4-aspartylphosphate. The region spanning 142–207 (DSTLISVLSN…ELIDLAKRNN (66 aa)) is the HTH luxR-type domain. A DNA-binding region (H-T-H motif) is located at residues 166 to 185 (NKDIADSMFLSNKTVSTYKT).

Homodimer. In terms of processing, phosphorylated by BvgS.

Functionally, member of the two-component regulatory system BvgS/BvgA. Activates the transcription of virulence genes. This Bordetella bronchiseptica (strain ATCC BAA-588 / NCTC 13252 / RB50) (Alcaligenes bronchisepticus) protein is Virulence factors putative positive transcription regulator BvgA (bvgA).